Here is a 654-residue protein sequence, read N- to C-terminus: tRNA 5-methylaminomethyl-2-thiouridine biosynthesis bifunctional protein MnmC (654 aa).

The interval 1–235 is tRNA (mnm(5)s(2)U34)-methyltransferase; the sequence is MSDFQHAQLD…KREMLGGTYQ (235 aa). An FAD-dependent cmnm(5)s(2)U34 oxidoreductase region spans residues 261–654; the sequence is VGGGLAGCAS…LRDLVRGQRG (394 aa).

In the N-terminal section; belongs to the methyltransferase superfamily. tRNA (mnm(5)s(2)U34)-methyltransferase family. It in the C-terminal section; belongs to the DAO family. It depends on FAD as a cofactor.

The protein localises to the cytoplasm. It catalyses the reaction 5-aminomethyl-2-thiouridine(34) in tRNA + S-adenosyl-L-methionine = 5-methylaminomethyl-2-thiouridine(34) in tRNA + S-adenosyl-L-homocysteine + H(+). Catalyzes the last two steps in the biosynthesis of 5-methylaminomethyl-2-thiouridine (mnm(5)s(2)U) at the wobble position (U34) in tRNA. Catalyzes the FAD-dependent demodification of cmnm(5)s(2)U34 to nm(5)s(2)U34, followed by the transfer of a methyl group from S-adenosyl-L-methionine to nm(5)s(2)U34, to form mnm(5)s(2)U34. This chain is tRNA 5-methylaminomethyl-2-thiouridine biosynthesis bifunctional protein MnmC, found in Pseudomonas paraeruginosa (strain DSM 24068 / PA7) (Pseudomonas aeruginosa (strain PA7)).